Consider the following 419-residue polypeptide: Histidine--tRNA ligase (419 aa).

It belongs to the class-II aminoacyl-tRNA synthetase family. As to quaternary structure, homodimer.

The protein resides in the cytoplasm. It carries out the reaction tRNA(His) + L-histidine + ATP = L-histidyl-tRNA(His) + AMP + diphosphate + H(+). This Methylobacillus flagellatus (strain ATCC 51484 / DSM 6875 / VKM B-1610 / KT) protein is Histidine--tRNA ligase.